The sequence spans 254 residues: Adenosine 5'-phosphosulfate reductase (254 aa).

The [4Fe-4S] cluster site is built by Cys131, Cys132, Cys212, and Cys215. Cys238 serves as the catalytic Nucleophile; cysteine thiosulfonate intermediate.

Belongs to the PAPS reductase family. CysH subfamily. Requires [4Fe-4S] cluster as cofactor.

It localises to the cytoplasm. It catalyses the reaction [thioredoxin]-disulfide + sulfite + AMP + 2 H(+) = adenosine 5'-phosphosulfate + [thioredoxin]-dithiol. The protein operates within sulfur metabolism; hydrogen sulfide biosynthesis; sulfite from sulfate. Its function is as follows. Catalyzes the formation of sulfite from adenosine 5'-phosphosulfate (APS) using thioredoxin as an electron donor. The sequence is that of Adenosine 5'-phosphosulfate reductase from Mesorhizobium japonicum (strain LMG 29417 / CECT 9101 / MAFF 303099) (Mesorhizobium loti (strain MAFF 303099)).